A 545-amino-acid polypeptide reads, in one-letter code: RNA-directed RNA polymerase beta chain (545 aa).

The RdRp catalytic domain maps to 243–373 (RLAQQGSRDG…PNLRKTFTSG (131 aa)).

As to quaternary structure, part of the viral RNA-dependent RNA polymerase complex, the other subunits are probably the host ribosomal protein S1, EF-Tu and EF-Ts.

It catalyses the reaction RNA(n) + a ribonucleoside 5'-triphosphate = RNA(n+1) + diphosphate. Its function is as follows. This is the catalytic subunit of the viral RNA-dependent RNA polymerase complex. This complex is involved in viral RNA replication that produces (+)-stranded genomes via a complementary, (-)-stranded intermediate. The chain is RNA-directed RNA polymerase beta chain from Enterobacteria phage fr (Bacteriophage fr).